Reading from the N-terminus, the 77-residue chain is DNA-directed RNA polymerase subunit Rpo10 (77 aa).

Residues C7, C10, C44, and C45 each coordinate Zn(2+).

This sequence belongs to the archaeal Rpo10/eukaryotic RPB10 RNA polymerase subunit family. As to quaternary structure, part of the RNA polymerase complex. Requires Zn(2+) as cofactor.

The protein localises to the cytoplasm. It carries out the reaction RNA(n) + a ribonucleoside 5'-triphosphate = RNA(n+1) + diphosphate. DNA-dependent RNA polymerase (RNAP) catalyzes the transcription of DNA into RNA using the four ribonucleoside triphosphates as substrates. The sequence is that of DNA-directed RNA polymerase subunit Rpo10 from Aeropyrum pernix (strain ATCC 700893 / DSM 11879 / JCM 9820 / NBRC 100138 / K1).